Consider the following 507-residue polypeptide: Cobyric acid synthase (507 aa).

One can recognise a GATase cobBQ-type domain in the interval 273–468; it reads RPVIAVIAYP…LHGMFEDPAV (196 aa). Catalysis depends on C354, which acts as the Nucleophile. The active site involves H460.

It belongs to the CobB/CobQ family. CobQ subfamily.

It functions in the pathway cofactor biosynthesis; adenosylcobalamin biosynthesis. Its function is as follows. Catalyzes amidations at positions B, D, E, and G on adenosylcobyrinic A,C-diamide. NH(2) groups are provided by glutamine, and one molecule of ATP is hydrogenolyzed for each amidation. The chain is Cobyric acid synthase from Polaromonas sp. (strain JS666 / ATCC BAA-500).